We begin with the raw amino-acid sequence, 239 residues long: L-cystine transport system permease protein TcyL (239 aa).

In terms of domain architecture, ABC transmembrane type-1 spans 21–216; that stretch reads LPVTLYILTL…AVAVLFEWFF (196 aa). Helical transmembrane passes span 25-45, 69-89, 96-116, and 196-216; these read LYIL…LALP, IMVQ…LIGI, PFYA…AEII, and EVYI…EWFF.

The protein belongs to the binding-protein-dependent transport system permease family. In terms of assembly, the complex is composed of two ATP-binding proteins (TcyN), two transmembrane proteins (TcyL and TcyM) and two solute-binding proteins (TcyJ and TcyK).

Its subcellular location is the cell membrane. Its function is as follows. Part of the ABC transporter complex TcyJKLMN involved in L-cystine import. Probably responsible for the translocation of the substrate across the membrane. Is also involved in cystathionine, djenkolate, and S-methylcysteine transport. This Bacillus subtilis (strain 168) protein is L-cystine transport system permease protein TcyL (tcyL).